A 408-amino-acid chain; its full sequence is Bone morphogenetic protein 4 (408 aa).

Residues 1–19 (MIPGNRMLMVVLLCQVLLG) form the signal peptide. Residues 20 to 292 (GATDASLIPE…HTLTRRRAKR (273 aa)) constitute a propeptide that is removed on maturation. Residue S91 is modified to Phosphoserine. The segment at 91-113 (SGEEEEEEQSQGTGLEYPERPAS) is disordered. N144 and N209 each carry an N-linked (GlcNAc...) asparagine glycan. The segment at 281 to 307 (RGHTLTRRRAKRSPKHHPQRSRKKNKN) is disordered. Residues 284 to 307 (TLTRRRAKRSPKHHPQRSRKKNKN) show a composition bias toward basic residues. Disulfide bonds link C308-C373, C337-C405, and C341-C407. Residues N350 and N365 are each glycosylated (N-linked (GlcNAc...) asparagine).

The protein belongs to the TGF-beta family. In terms of assembly, homodimer; disulfide-linked. Interacts with GREM2. Part of a complex consisting of TWSG1 and CHRD. Interacts with the serine proteases, HTRA1 and HTRA3; the interaction with either inhibits BMP4-mediated signaling. The HTRA protease activity is required for this inhibition. Interacts with SOSTDC1. Interacts with FBN1 (via N-terminal domain) and FBN2. Interacts with type I receptor BMPR1A. Interacts with type II receptor BMPR2. Interacts with FSTL1; this interaction inhibits the activation of the BMP4/Smad1/5/8 signaling pathway. Interacts with SCUBE3. Interacts with TGFBR3.

It is found in the secreted. Its subcellular location is the extracellular space. The protein resides in the extracellular matrix. In terms of biological role, growth factor of the TGF-beta superfamily that plays essential roles in many developmental processes, including neurogenesis, vascular development, angiogenesis and osteogenesis. Acts in concert with PTHLH/PTHRP to stimulate ductal outgrowth during embryonic mammary development and to inhibit hair follicle induction. Initiates the canonical BMP signaling cascade by associating with type I receptor BMPR1A and type II receptor BMPR2. Once all three components are bound together in a complex at the cell surface, BMPR2 phosphorylates and activates BMPR1A. In turn, BMPR1A propagates signal by phosphorylating SMAD1/5/8 that travel to the nucleus and act as activators and repressors of transcription of target genes. Positively regulates the expression of odontogenic development regulator MSX1 via inducing the IPO7-mediated import of SMAD1 to the nucleus. Required for MSX1-mediated mesenchymal molar tooth bud development beyond the bud stage, via promoting Wnt signaling. Acts as a positive regulator of odontoblast differentiation during mesenchymal tooth germ formation, expression is repressed during the bell stage by MSX1-mediated inhibition of CTNNB1 signaling. Able to induce its own expression in dental mesenchymal cells and also in the neighboring dental epithelial cells via an MSX1-mediated pathway. Can also signal through non-canonical BMP pathways such as ERK/MAP kinase, PI3K/Akt, or SRC cascades. For example, induces SRC phosphorylation which, in turn, activates VEGFR2, leading to an angiogenic response. The polypeptide is Bone morphogenetic protein 4 (Rattus norvegicus (Rat)).